The primary structure comprises 389 residues: Type II methyltransferase M1.ScrFI (389 aa).

Residues 16–71 enclose the HTH cro/C1-type domain; it reads IKEKRLRLNMTQKELADAVGMSKNGDRTIRRWENGETCPSQLEISAILRFPEIAPF. An SAM-dependent MTase C5-type domain is found at 79–387; sequence YKMIDLFAGI…EKMLEVLEKS (309 aa). Residue Cys-149 is part of the active site.

This sequence belongs to the class I-like SAM-binding methyltransferase superfamily. C5-methyltransferase family.

It catalyses the reaction a 2'-deoxycytidine in DNA + S-adenosyl-L-methionine = a 5-methyl-2'-deoxycytidine in DNA + S-adenosyl-L-homocysteine + H(+). A methylase, recognizes the double-stranded sequence 5'-CCNGG-3', methylates C-2 on both strands, and protects the DNA from cleavage by the ScrFI endonuclease. The sequence is that of Type II methyltransferase M1.ScrFI (scrFIAM) from Lactococcus lactis subsp. cremoris (Streptococcus cremoris).